A 422-amino-acid chain; its full sequence is tRNA(Met) cytidine acetate ligase (422 aa).

ATP is bound by residues 7 to 20 (ITEY…HLYH), Gly-102, Asn-172, and Arg-197.

It belongs to the TmcAL family.

The protein resides in the cytoplasm. It catalyses the reaction cytidine(34) in elongator tRNA(Met) + acetate + ATP = N(4)-acetylcytidine(34) in elongator tRNA(Met) + AMP + diphosphate. Its function is as follows. Catalyzes the formation of N(4)-acetylcytidine (ac(4)C) at the wobble position of elongator tRNA(Met), using acetate and ATP as substrates. First activates an acetate ion to form acetyladenylate (Ac-AMP) and then transfers the acetyl group to tRNA to form ac(4)C34. The chain is tRNA(Met) cytidine acetate ligase from Halothermothrix orenii (strain H 168 / OCM 544 / DSM 9562).